The sequence spans 44 residues: Photosystem I reaction center subunit IX (44 aa).

The helical transmembrane segment at 7 to 27 (YLSVAPVLSTLWFGSLAGLLI) threads the bilayer.

Belongs to the PsaJ family.

The protein resides in the plastid. The protein localises to the chloroplast thylakoid membrane. Functionally, may help in the organization of the PsaE and PsaF subunits. This is Photosystem I reaction center subunit IX from Fagopyrum esculentum subsp. ancestrale (Wild buckwheat).